The chain runs to 144 residues: Large ribosomal subunit protein uL15 (144 aa).

The segment at 1 to 48 (MQLNNLKPADGSKHAKRRVGRGIGSGLGKTAGRGHKGQKSRSGGFHKV) is disordered. Positions 21–31 (RGIGSGLGKTA) are enriched in gly residues.

The protein belongs to the universal ribosomal protein uL15 family. As to quaternary structure, part of the 50S ribosomal subunit.

Binds to the 23S rRNA. This is Large ribosomal subunit protein uL15 from Cupriavidus metallidurans (strain ATCC 43123 / DSM 2839 / NBRC 102507 / CH34) (Ralstonia metallidurans).